A 551-amino-acid polypeptide reads, in one-letter code: Dol-P-Man:Man(7)GlcNAc(2)-PP-Dol alpha-1,6-mannosyltransferase (551 aa).

Topologically, residues 1–2 (MR) are lumenal. The helical transmembrane segment at 3 to 23 (WSVLDTVLLTVISFHLIQAPF) threads the bilayer. The Cytoplasmic segment spans residues 24–61 (TKVEESFNIQAIHDILTYSVFDISQYDHLKFPGVVPRT). The chain crosses the membrane as a helical span at residues 62–82 (FVGAVIIAMLSRPYLYLSSLI). Residues 83 to 89 (QTSRPTS) are Lumenal-facing. Residues 90-110 (IDVQLVVRGIVGLTNGLSFIY) form a helical membrane-spanning segment. Topologically, residues 111-136 (LKNCLQDMFDEITEKKKEENEDKDIY) are cytoplasmic. Residues 137–157 (IYDSAGTWFLLFLIGSFHLMF) form a helical membrane-spanning segment. The Lumenal segment spans residues 158 to 178 (YSTRTLPNFVMTLPLTNVALG). The helical transmembrane segment at 179 to 199 (WVLLGRYNAAIFLSALVAIVF) threads the bilayer. Residues 200 to 202 (RLE) lie on the Cytoplasmic side of the membrane. A helical membrane pass occupies residues 203–223 (VSALSAGIALFSVIFKKISLF). Residues 224 to 227 (DAIK) lie on the Lumenal side of the membrane. A helical membrane pass occupies residues 228 to 248 (FGIFGLGLGSAISITVDSYFW). The Cytoplasmic segment spans residues 249-275 (QEWCLPEVDGFLFNVVAGYASKWGVEP). The helical transmembrane segment at 276–296 (VTAYFTHYLRMMFMPPTVLLL) threads the bilayer. The Lumenal portion of the chain corresponds to 297 to 303 (NYFGYKL). The chain crosses the membrane as a helical span at residues 304 to 324 (APAKLKIVSLASLFHIIVLSF). Topologically, residues 325 to 331 (QPHKEWR) are cytoplasmic. The chain crosses the membrane as a helical span at residues 332 to 352 (FIIYAVPSIMLLGATGAAHLW). The Lumenal portion of the chain corresponds to 353–365 (ENMKVKKITNVLC). The chain crosses the membrane as a helical span at residues 366–386 (LAILPLSIMTSFFISMAFLYI). Residues 387–417 (SRMNYPGGEALTSFNDMIVEKNITNATVHIS) lie on the Cytoplasmic side of the membrane. The chain crosses the membrane as a helical span at residues 418–438 (IPPCMTGVTLFGELNYGVYGI). Topologically, residues 439-551 (NYDKTENTTL…KRIKQDEKTD (113 aa)) are lumenal.

The protein belongs to the glycosyltransferase 22 family.

The protein localises to the endoplasmic reticulum membrane. The enzyme catalyses an alpha-D-Man-(1-&gt;2)-alpha-D-Man-(1-&gt;2)-alpha-D-Man-(1-&gt;3)-[alpha-D-Man-(1-&gt;2)-alpha-D-Man-(1-&gt;3)-alpha-D-Man-(1-&gt;6)]-beta-D-Man-(1-&gt;4)-beta-D-GlcNAc-(1-&gt;4)-alpha-D-GlcNAc-diphospho-di-trans,poly-cis-dolichol + a di-trans,poly-cis-dolichyl beta-D-mannosyl phosphate = an alpha-D-Man-(1-&gt;2)-alpha-D-Man-(1-&gt;2)-alpha-D-Man-(1-&gt;3)-[alpha-D-Man-(1-&gt;2)-alpha-D-Man-(1-&gt;3)-[alpha-D-Man-(1-&gt;6)]-alpha-D-Man-(1-&gt;6)]-beta-D-Man-(1-&gt;4)-beta-D-GlcNAc-(1-&gt;4)-alpha-D-GlcNAc-diphospho-di-trans,poly-cis-dolichol + a di-trans,poly-cis-dolichyl phosphate + H(+). It participates in protein modification; protein glycosylation. Mannosyltransferase that operates in the biosynthetic pathway of dolichol-linked oligosaccharides, the glycan precursors employed in protein asparagine (N)-glycosylation. The assembly of dolichol-linked oligosaccharides begins on the cytosolic side of the endoplasmic reticulum membrane and finishes in its lumen. The sequential addition of sugars to dolichol pyrophosphate produces dolichol-linked oligosaccharides containing fourteen sugars, including two GlcNAcs, nine mannoses and three glucoses. Once assembled, the oligosaccharide is transferred from the lipid to nascent proteins by oligosaccharyltransferases. In the lumen of the endoplasmic reticulum, adds the eighth mannose residue in an alpha-1,6 linkage onto Man(7)GlcNAc(2)-PP-dolichol to produce Man(8)GlcNAc(2)-PP-dolichol. This is Dol-P-Man:Man(7)GlcNAc(2)-PP-Dol alpha-1,6-mannosyltransferase (ALG12) from Saccharomyces cerevisiae (strain ATCC 204508 / S288c) (Baker's yeast).